The primary structure comprises 211 residues: UPF0319 protein VC_A0026 (211 aa).

Residues Met-1–Ala-21 form the signal peptide.

Belongs to the UPF0319 family.

The polypeptide is UPF0319 protein VC_A0026 (Vibrio cholerae serotype O1 (strain ATCC 39315 / El Tor Inaba N16961)).